The chain runs to 65 residues: Large ribosomal subunit protein uL29 (65 aa).

It belongs to the universal ribosomal protein uL29 family.

The polypeptide is Large ribosomal subunit protein uL29 (Bacteroides thetaiotaomicron (strain ATCC 29148 / DSM 2079 / JCM 5827 / CCUG 10774 / NCTC 10582 / VPI-5482 / E50)).